A 202-amino-acid polypeptide reads, in one-letter code: FMN-dependent NADH:quinone oxidoreductase (202 aa).

FMN contacts are provided by residues Ser-9, 15–17, 95–98, and 139–142; these read SVS, MYNF, and SRGG.

The protein belongs to the azoreductase type 1 family. In terms of assembly, homodimer. Requires FMN as cofactor.

The enzyme catalyses 2 a quinone + NADH + H(+) = 2 a 1,4-benzosemiquinone + NAD(+). It carries out the reaction N,N-dimethyl-1,4-phenylenediamine + anthranilate + 2 NAD(+) = 2-(4-dimethylaminophenyl)diazenylbenzoate + 2 NADH + 2 H(+). Quinone reductase that provides resistance to thiol-specific stress caused by electrophilic quinones. Its function is as follows. Also exhibits azoreductase activity. Catalyzes the reductive cleavage of the azo bond in aromatic azo compounds to the corresponding amines. The sequence is that of FMN-dependent NADH:quinone oxidoreductase from Laribacter hongkongensis (strain HLHK9).